We begin with the raw amino-acid sequence, 145 residues long: Spanin, inner membrane subunit (145 aa).

The Cytoplasmic portion of the chain corresponds to 1-3; it reads MSR. Residues 4–24 traverse the membrane as a helical; Signal-anchor for type II membrane protein segment; the sequence is IKAIIASVIICIIVCLSWAVN. Residues 25-145 lie on the Periplasmic side of the membrane; the sequence is HYRDNAITYK…QEYIRSQCLK (121 aa).

Belongs to the Lambdavirus i-spanin family. As to quaternary structure, homodimer; disulfide-linked. Interacts (via C-terminus) with the spanin outer lipoprotein subunit (via C-terminus). Part of the spanin complex which spans the entire periplasmic space. The spanin complex is composed of one homodimer of the i-spanin linked by intermolecular disulfide bonds involving two Cys residues and one homodimer of the o-spanin covalently linked by an intermolecular disulfide bond involving one Cys.

The protein resides in the host cell inner membrane. In terms of biological role, component of the spanin complex that disrupts the host outer membrane and participates in cell lysis during virus exit. The spanin complex conducts the final step in host lysis by disrupting the outer membrane after holin and endolysin action have permeabilized the inner membrane and degraded the host peptidoglycans. Host outer membrane disruption is due to local fusion between the inner and outer membrane performed by the spanin complex. The sequence is that of Spanin, inner membrane subunit (15) from Salmonella typhimurium (Bacteriophage P22).